The following is a 126-amino-acid chain: Regulatory protein MgsR (126 aa).

A disulfide bridge connects residues C13 and C16.

It belongs to the ArsC family.

The protein localises to the cytoplasm. With respect to regulation, activity is controlled at multiple levels. Regulation includes a positive autoregulatory loop on mgsR transcription and a post-translational redox-sensitive activation step by an intramolecular disulfide bond formation in response to ethanol stress. In addition, protein stability is strictly controlled by rapid proteolytic degradation by the ClpXP and ClpCP proteases. The McsB protein-arginine kinase might serve as a proteolytic adapter for the ClpX ATPase in the degradation mechanism of MgsR. Its function is as follows. Regulates transcription of a subregulon within the general stress response. Exerts positive and negative effects in response to ethanol stress. The protein is Regulatory protein MgsR of Bacillus subtilis (strain 168).